A 199-amino-acid polypeptide reads, in one-letter code: 3-isopropylmalate dehydratase small subunit (199 aa).

Belongs to the LeuD family. LeuD type 1 subfamily. As to quaternary structure, heterodimer of LeuC and LeuD.

The catalysed reaction is (2R,3S)-3-isopropylmalate = (2S)-2-isopropylmalate. Its pathway is amino-acid biosynthesis; L-leucine biosynthesis; L-leucine from 3-methyl-2-oxobutanoate: step 2/4. In terms of biological role, catalyzes the isomerization between 2-isopropylmalate and 3-isopropylmalate, via the formation of 2-isopropylmaleate. This is 3-isopropylmalate dehydratase small subunit from Bacillus velezensis (strain DSM 23117 / BGSC 10A6 / LMG 26770 / FZB42) (Bacillus amyloliquefaciens subsp. plantarum).